Consider the following 249-residue polypeptide: Adenosylcobinamide-GDP ribazoletransferase (249 aa).

6 consecutive transmembrane segments (helical) span residues 36-56 (LVGFLLGSIAAGVCYAMHSIG), 57-77 (LNLAADVLGLVTIITLTGGLH), 106-126 (VGAMGVIALATVLLLKIAFLF), 133-153 (KLTAFIMAPMAGRWAMVLAIT), 188-208 (LWLFGLPGLALLGIVFFITWL), and 226-246 (GALGEMIETWVIFLILLGQQI).

This sequence belongs to the CobS family. Requires Mg(2+) as cofactor.

Its subcellular location is the cell membrane. It carries out the reaction alpha-ribazole + adenosylcob(III)inamide-GDP = adenosylcob(III)alamin + GMP + H(+). It catalyses the reaction alpha-ribazole 5'-phosphate + adenosylcob(III)inamide-GDP = adenosylcob(III)alamin 5'-phosphate + GMP + H(+). It functions in the pathway cofactor biosynthesis; adenosylcobalamin biosynthesis; adenosylcobalamin from cob(II)yrinate a,c-diamide: step 7/7. Joins adenosylcobinamide-GDP and alpha-ribazole to generate adenosylcobalamin (Ado-cobalamin). Also synthesizes adenosylcobalamin 5'-phosphate from adenosylcobinamide-GDP and alpha-ribazole 5'-phosphate. This is Adenosylcobinamide-GDP ribazoletransferase from Desulforamulus reducens (strain ATCC BAA-1160 / DSM 100696 / MI-1) (Desulfotomaculum reducens).